Reading from the N-terminus, the 418-residue chain is Probable carboxypeptidase AFLA_000940 (418 aa).

The N-terminal stretch at 1-18 (MKATDLFHVTVLVAGALA) is a signal peptide. N-linked (GlcNAc...) asparagine glycosylation is present at N74. D147 serves as a coordination point for Zn(2+). N168 carries an N-linked (GlcNAc...) asparagine glycan. E179 (proton acceptor) is an active-site residue. Residue E180 coordinates Zn(2+).

It belongs to the peptidase M20A family. Requires Zn(2+) as cofactor.

The protein localises to the secreted. The polypeptide is Probable carboxypeptidase AFLA_000940 (Aspergillus flavus (strain ATCC 200026 / FGSC A1120 / IAM 13836 / NRRL 3357 / JCM 12722 / SRRC 167)).